The sequence spans 192 residues: UPF0301 protein Rru_A3059 (192 aa).

This sequence belongs to the UPF0301 (AlgH) family.

The chain is UPF0301 protein Rru_A3059 from Rhodospirillum rubrum (strain ATCC 11170 / ATH 1.1.1 / DSM 467 / LMG 4362 / NCIMB 8255 / S1).